A 141-amino-acid polypeptide reads, in one-letter code: Large ribosomal subunit protein uL11 (141 aa).

The protein belongs to the universal ribosomal protein uL11 family. In terms of assembly, part of the ribosomal stalk of the 50S ribosomal subunit. Interacts with L10 and the large rRNA to form the base of the stalk. L10 forms an elongated spine to which L12 dimers bind in a sequential fashion forming a multimeric L10(L12)X complex. In terms of processing, one or more lysine residues are methylated.

Functionally, forms part of the ribosomal stalk which helps the ribosome interact with GTP-bound translation factors. This chain is Large ribosomal subunit protein uL11, found in Lactobacillus acidophilus (strain ATCC 700396 / NCK56 / N2 / NCFM).